Here is a 511-residue protein sequence, read N- to C-terminus: Maturase K (511 aa).

It belongs to the intron maturase 2 family. MatK subfamily.

It is found in the plastid. Its subcellular location is the chloroplast. In terms of biological role, usually encoded in the trnK tRNA gene intron. Probably assists in splicing its own and other chloroplast group II introns. The protein is Maturase K of Mandragora officinarum (Mandrake).